The following is a 689-amino-acid chain: Armadillo-like helical domain-containing protein 3 (689 aa).

A helical transmembrane segment spans residues 520–538 (IFTLTLMVVNLFNMFITYG).

Belongs to the ARMH3 family.

It localises to the golgi apparatus membrane. It is found in the cytoplasm. In terms of biological role, may be involved in Golgi maintenance and protein secretion. The sequence is that of Armadillo-like helical domain-containing protein 3 from Xenopus laevis (African clawed frog).